The primary structure comprises 298 residues: S-adenosylmethionine-dependent nucleotide dehydratase (298 aa).

Residues A8 to E235 form the Radical SAM core domain. [4Fe-4S] cluster-binding residues include C22, C26, and C29.

The protein belongs to the radical SAM superfamily. Viperin family. [4Fe-4S] cluster is required as a cofactor.

It carries out the reaction CTP + AH2 + S-adenosyl-L-methionine = 3'-deoxy-3',4'-didehydro-CTP + 5'-deoxyadenosine + L-methionine + A + H2O + H(+). It catalyses the reaction UTP + AH2 + S-adenosyl-L-methionine = 3'-deoxy-3',4'-didehydro-UTP + 5'-deoxyadenosine + L-methionine + A + H2O + H(+). Its function is as follows. Expression of pVip8 in E.coli (strain MG1655) confers resistance to phages lambda, P1, SECphi8 and T7. Prevents culture collapse upon infection with T7. Catalyzes the conversion of cytidine triphosphate (CTP) to 3'-deoxy-3',4'-didehydro-CTP (ddhCTP) and uridine triphosphate (UTP) to 3'-deoxy-3',4'-didehydro-UTP (ddhUTP), probably via a SAM-dependent radical mechanism. The modified nucleotides repress transcription from T7 RNA polymerase-directed genes (possibly by acting as chain terminators), strongly suggesting these nucleotides block viral polymerase transcription. In Psychrobacter lutiphocae (strain DSM 21542 / CCUG 56590 / IMMIB L-1110), this protein is S-adenosylmethionine-dependent nucleotide dehydratase.